Here is a 515-residue protein sequence, read N- to C-terminus: Maturase K (515 aa).

Belongs to the intron maturase 2 family. MatK subfamily.

Its subcellular location is the plastid. It localises to the chloroplast. Its function is as follows. Usually encoded in the trnK tRNA gene intron. Probably assists in splicing its own and other chloroplast group II introns. In Pinus clausa (Sand pine), this protein is Maturase K.